Reading from the N-terminus, the 511-residue chain is Cobyric acid synthase (511 aa).

In terms of domain architecture, GATase cobBQ-type spans 251-443 (LLDIAIICLP…IHGIFDNDVF (193 aa)). Residue C332 is the Nucleophile of the active site. Residue H435 is part of the active site.

The protein belongs to the CobB/CobQ family. CobQ subfamily.

Its pathway is cofactor biosynthesis; adenosylcobalamin biosynthesis. Catalyzes amidations at positions B, D, E, and G on adenosylcobyrinic A,C-diamide. NH(2) groups are provided by glutamine, and one molecule of ATP is hydrogenolyzed for each amidation. This chain is Cobyric acid synthase, found in Listeria monocytogenes serotype 4b (strain CLIP80459).